Consider the following 213-residue polypeptide: Neuromodulin (213 aa).

The interval 1 to 213 is disordered; sequence MLCCIRRTKP…AEEAGKDQNV (213 aa). 2 S-palmitoyl cysteine lipidation sites follow: C3 and C4. The span at 9–33 shows a compositional bias: basic and acidic residues; the sequence is KPVEKNEEADQEIKQDGTKPEENAH. Positions 32 to 61 constitute an IQ domain; that stretch reads AHKAATKIQASFRGHITRKKMKDEDKDGEN. Positions 57-73 are enriched in acidic residues; the sequence is KDGENDTAPDESAETEE. The span at 74–86 shows a compositional bias: basic and acidic residues; the sequence is KEERVSPSEEKPV. Residues 102 to 122 show a composition bias toward low complexity; the sequence is PNSPAAEAPPTAATDSAPSDT. Positions 157–169 are enriched in acidic residues; that stretch reads EKEEEEEEEEEEE. A compositionally biased stretch (basic and acidic residues) spans 191–213; it reads QTDKKEALDDSKPAEEAGKDQNV.

It belongs to the neuromodulin family. Binds calmodulin with a greater affinity in the absence of Ca(2+) than in its presence. Post-translationally, palmitoylated. Palmitoylation is essential for plasma membrane association.

The protein localises to the cell membrane. It is found in the cell projection. The protein resides in the growth cone membrane. Its subcellular location is the synapse. It localises to the filopodium membrane. In terms of biological role, this protein is associated with nerve growth. It is a major component of the motile 'growth cones' that form the tips of elongating axons. Plays a role in axonal and dendritic filopodia induction. In Carassius auratus (Goldfish), this protein is Neuromodulin (gap43).